We begin with the raw amino-acid sequence, 3658 residues long: Serine/threonine-protein kinase SMG1 (3658 aa).

Disordered stretches follow at residues 1-99 (MSRR…TYGR) and 116-142 (FTSVQHGSRALATKDMRKSQERSMSYS). A compositionally biased stretch (polar residues) spans 24–33 (NDWQPRTDSA). 2 stretches are compositionally biased toward basic and acidic residues: residues 67–84 (QRHDDTRGHADIQNDEKG) and 127–136 (ATKDMRKSQE). Lys-171 is modified (N6-acetyllysine). Residues 1281-1864 (RELQKSIEVQ…LYPAIVGTIS (584 aa)) form the FAT domain. The stretch at 1815 to 1850 (APWRGIIPQLFSRLNHPEVYVRQSICNLLCRVAQDS) is one HEAT repeat. The disordered stretch occupies residues 1896–1917 (ECEGGSPPASQDSNKDEPKSGL). Positions 2122–2461 (VGGTITILPT…MEREITRSLF (340 aa)) constitute a PI3K/PI4K catalytic domain. Residues 2128–2134 (ILPTKTK) are G-loop. The interval 2330-2338 (GLGDRHLDN) is catalytic loop. Residues 2350–2374 (HIDYNVCFEKGKSLRVPEKVPFRMT) are activation loop. Thr-3547 bears the Phosphothreonine mark. Phosphoserine is present on residues Ser-3553 and Ser-3567. A compositionally biased stretch (polar residues) spans 3565–3576 (ATSADTPPSTIP). Residues 3565-3588 (ATSADTPPSTIPGTGKSIACSPKK) are disordered. Phosphothreonine is present on residues Thr-3570 and Thr-3574. Residues 3626 to 3658 (RRMSVAEQVDYVIKEATNLDNLAQLYEGWTAWV) form the FATC domain.

It belongs to the PI3/PI4-kinase family. As to quaternary structure, component of the SMG1C complex composed of SMG1, SMG8 and SMG9; the recruitment of SMG8 to SMG1 N-terminus induces a large conformational change in the SMG1 C-terminal head domain containing the catalytic domain. Component of the transient SURF (SMG1-UPF1-eRF1-eRF3) complex. Part of a complex composed of SMG1, DHX34 and UPF1; within the complex DHX34 acts as a scaffolding protein to facilitate SMG1 phosphorylation of UPF1. Interacts with PRKCI. Interacts with TELO2 and TTI1. Interacts with RUVBL1 and RUVBL2. Interacts with DHX34 (via C-terminus); the interaction is RNA-independent. Mn(2+) serves as cofactor. Post-translationally, autophosphorylated.

The protein localises to the nucleus. It localises to the cytoplasm. It carries out the reaction L-seryl-[protein] + ATP = O-phospho-L-seryl-[protein] + ADP + H(+). The catalysed reaction is L-threonyl-[protein] + ATP = O-phospho-L-threonyl-[protein] + ADP + H(+). Inhibited by caffeine, LY294002 and wortmannin. Functionally, serine/threonine protein kinase involved in both mRNA surveillance and genotoxic stress response pathways. Recognizes the substrate consensus sequence [ST]-Q. Plays a central role in nonsense-mediated decay (NMD) of mRNAs containing premature stop codons by phosphorylating UPF1/RENT1. Recruited by release factors to stalled ribosomes together with SMG8 and SMG9 (forming the SMG1C protein kinase complex), and UPF1 to form the transient SURF (SMG1-UPF1-eRF1-eRF3) complex. In EJC-dependent NMD, the SURF complex associates with the exon junction complex (EJC) through UPF2 and allows the formation of an UPF1-UPF2-UPF3 surveillance complex which is believed to activate NMD. Also acts as a genotoxic stress-activated protein kinase that displays some functional overlap with ATM. Can phosphorylate p53/TP53 and is required for optimal p53/TP53 activation after cellular exposure to genotoxic stress. Its depletion leads to spontaneous DNA damage and increased sensitivity to ionizing radiation (IR). May activate PRKCI but not PRKCZ. The chain is Serine/threonine-protein kinase SMG1 from Mus musculus (Mouse).